The chain runs to 2839 residues: Neurofibromin (2839 aa).

Residue A2 is modified to N-acetylalanine. A phosphoserine mark is found at S864 and S876. The Ras-GAP domain occupies 1251–1482 (HLLYQLLWNM…DAARRFFLDI (232 aa)). One can recognise a CRAL-TRIO domain in the interval 1580 to 1738 (EKEEFKALKT…ATLALEEDLK (159 aa)). The tract at residues 1580 to 1837 (EKEEFKALKT…RTRWELSQPD (258 aa)) is lipid binding. Residues S2188 and S2467 each carry the phosphoserine modification. Residue T2514 is modified to Phosphothreonine. A phosphoserine mark is found at S2515, S2521, S2523, and S2543. Positions 2555–2571 (KRQEMESGITTPPKMRR) match the Bipartite nuclear localization signal motif. T2565 carries the post-translational modification Phosphothreonine. 3 positions are modified to phosphoserine: S2597, S2802, and S2817. The tract at residues 2787 to 2839 (TSQHSPGIDKENVELSPTTGHCNSGRTRHGSASQVQKQRSAGSFKRNSIKKIV) is disordered. The span at 2801 to 2827 (LSPTTGHCNSGRTRHGSASQVQKQRSA) shows a compositional bias: polar residues.

As to quaternary structure, interacts with HTR6. Interacts with SPRED2. In terms of processing, ubiquitinated by RNF7/RBX2, leading to its degradation. Detected in brain, peripheral nerve, lung, colon and muscle.

The protein resides in the nucleus. It is found in the nucleolus. It localises to the cell membrane. Functionally, stimulates the GTPase activity of Ras. NF1 shows greater affinity for Ras GAP, but lower specific activity. May be a regulator of Ras activity. The sequence is that of Neurofibromin (NF1) from Homo sapiens (Human).